The following is a 98-amino-acid chain: Large ribosomal subunit protein uL23 (98 aa).

This sequence belongs to the universal ribosomal protein uL23 family. As to quaternary structure, part of the 50S ribosomal subunit. Contacts protein L29, and trigger factor when it is bound to the ribosome.

Its function is as follows. One of the early assembly proteins it binds 23S rRNA. One of the proteins that surrounds the polypeptide exit tunnel on the outside of the ribosome. Forms the main docking site for trigger factor binding to the ribosome. This is Large ribosomal subunit protein uL23 from Rickettsia typhi (strain ATCC VR-144 / Wilmington).